The primary structure comprises 156 residues: Endoribonuclease YbeY (156 aa).

3 residues coordinate Zn(2+): histidine 117, histidine 121, and histidine 127.

Belongs to the endoribonuclease YbeY family. Zn(2+) serves as cofactor.

The protein localises to the cytoplasm. Functionally, single strand-specific metallo-endoribonuclease involved in late-stage 70S ribosome quality control and in maturation of the 3' terminus of the 16S rRNA. The sequence is that of Endoribonuclease YbeY from Herminiimonas arsenicoxydans.